We begin with the raw amino-acid sequence, 745 residues long: Photosystem I P700 chlorophyll a apoprotein A2 (745 aa).

8 helical membrane passes run 49–72 (LFAT…FHIA), 138–161 (LYAG…LHLQ), 178–202 (LNHH…HVAI), 276–294 (MAHH…GHMY), 338–361 (LHFQ…QHMY), 377–403 (AALY…IFLV), 425–447 (AIIS…LYVH), and 528–546 (FLVH…LILV). Positions 570 and 579 each coordinate [4Fe-4S] cluster. The next 2 helical transmembrane spans lie at 586–607 (AFYL…YWHW) and 654–676 (LAVW…MFLI). The chlorophyll a site is built by H665, M673, and Y681. Residue W682 participates in phylloquinone binding. A helical transmembrane segment spans residues 718 to 738 (LVGLAHFTVGYVLTYAAFVIA).

The protein belongs to the PsaA/PsaB family. In terms of assembly, the PsaA/B heterodimer binds the P700 chlorophyll special pair and subsequent electron acceptors. PSI consists of a core antenna complex that captures photons, and an electron transfer chain that converts photonic excitation into a charge separation. The cyanobacterial PSI reaction center is composed of one copy each of PsaA,B,C,D,E,F,I,J,K,L,M and X, and forms trimeric complexes. Requires PSI electron transfer chain: 5 chlorophyll a, 1 chlorophyll a', 2 phylloquinones and 3 4Fe-4S clusters. PSI core antenna: 90 chlorophyll a, 22 carotenoids, 3 phospholipids and 1 galactolipid. P700 is a chlorophyll a/chlorophyll a' dimer, A0 is one or more chlorophyll a, A1 is one or both phylloquinones and FX is a shared 4Fe-4S iron-sulfur center. as cofactor.

It localises to the cellular thylakoid membrane. The enzyme catalyses reduced [plastocyanin] + hnu + oxidized [2Fe-2S]-[ferredoxin] = oxidized [plastocyanin] + reduced [2Fe-2S]-[ferredoxin]. Its function is as follows. PsaA and PsaB bind P700, the primary electron donor of photosystem I (PSI), as well as the electron acceptors A0, A1 and FX. PSI is a plastocyanin/cytochrome c6-ferredoxin oxidoreductase, converting photonic excitation into a charge separation, which transfers an electron from the donor P700 chlorophyll pair to the spectroscopically characterized acceptors A0, A1, FX, FA and FB in turn. Oxidized P700 is reduced on the lumenal side of the thylakoid membrane by plastocyanin or cytochrome c6. In Synechococcus sp. (strain JA-3-3Ab) (Cyanobacteria bacterium Yellowstone A-Prime), this protein is Photosystem I P700 chlorophyll a apoprotein A2.